The sequence spans 205 residues: SCO2-like protein RP587 (205 aa).

Positions 82, 86, and 172 each coordinate Cu cation.

It belongs to the SCO1/2 family.

The chain is SCO2-like protein RP587 from Rickettsia prowazekii (strain Madrid E).